The chain runs to 305 residues: MTTIRVLGSAAGGGFPQWNCNCRNCDGVRRGTVRATPRTQSSIAVCGDGPEAILVNASPDILQQLRQTPALQPARAARDTAIAAVLLMDAQIDHVTGLLMLREHRRALPLYATASVLEDLAGAFPLTRILSHYCGLQCHALPCDGMAFSVPPLDGVALTAVPLQSKAPPYSPRRHAPQPGDNIGLRIEDRHSGRSAFYAPGLGQVDDHVFAQLRRADVVLVDGTFWRDDEMQALGFSTRSAADMGHLALSGPGGMIEVLDRLPARRKILIHINNTNPVLAEDSPERAELARHGIELAYDGMEIAL.

It belongs to the PqqB family.

It participates in cofactor biosynthesis; pyrroloquinoline quinone biosynthesis. In terms of biological role, may be involved in the transport of PQQ or its precursor to the periplasm. The protein is Coenzyme PQQ synthesis protein B of Cupriavidus taiwanensis (strain DSM 17343 / BCRC 17206 / CCUG 44338 / CIP 107171 / LMG 19424 / R1) (Ralstonia taiwanensis (strain LMG 19424)).